The chain runs to 170 residues: Siroheme decarboxylase NirL subunit (170 aa).

It belongs to the Ahb/Nir family. As to quaternary structure, probably forms a complex composed of NirD, NirL, NirG and NirH. All proteins are required for the total conversion of siroheme to didecarboxysiroheme.

The catalysed reaction is siroheme + 2 H(+) = 12,18-didecarboxysiroheme + 2 CO2. It functions in the pathway porphyrin-containing compound metabolism. Its function is as follows. Involved in heme d1 biosynthesis. Catalyzes the decarboxylation of siroheme into didecarboxysiroheme. This is Siroheme decarboxylase NirL subunit from Stutzerimonas stutzeri (Pseudomonas stutzeri).